Reading from the N-terminus, the 305-residue chain is Ribonuclease BN (305 aa).

Positions 64, 66, 68, 69, 141, 212, and 270 each coordinate Zn(2+). Aspartate 68 functions as the Proton acceptor in the catalytic mechanism.

It belongs to the RNase Z family. RNase BN subfamily. As to quaternary structure, homodimer. The cofactor is Zn(2+).

Its function is as follows. Zinc phosphodiesterase, which has both exoribonuclease and endoribonuclease activities. The chain is Ribonuclease BN from Escherichia coli O6:K15:H31 (strain 536 / UPEC).